The sequence spans 73 residues: Putative defensin-like protein 42 (73 aa).

Disulfide bonds link cysteine 6–cysteine 58, cysteine 18–cysteine 41, cysteine 27–cysteine 50, and cysteine 31–cysteine 52.

The protein belongs to the DEFL family.

This chain is Putative defensin-like protein 42, found in Arabidopsis thaliana (Mouse-ear cress).